Reading from the N-terminus, the 238-residue chain is Putative tyrosine-protein phosphatase OCA1 (238 aa).

The tract at residues 1-43 is disordered; the sequence is MTSKVGEYEDVPEDESRLTEENVSVPEEEVEDEDEEEDDDDDH. N-acetylthreonine is present on Thr2. Ser24 is modified (phosphoserine). The span at 26–42 shows a compositional bias: acidic residues; that stretch reads PEEEVEDEDEEEDDDDD. Residues 72–230 enclose the Tyrosine-protein phosphatase domain; sequence NFCPVERYLY…LVKIDKNKAP (159 aa). Catalysis depends on Cys168, which acts as the Phosphocysteine intermediate.

It belongs to the protein-tyrosine phosphatase family.

It is found in the cytoplasm. The enzyme catalyses O-phospho-L-tyrosyl-[protein] + H2O = L-tyrosyl-[protein] + phosphate. Putative tyrosine-protein phosphatase required for protection against superoxide stress. Involved in cell-cycle delay in response to linoleic acid hydroperoxide (LoaOOH). The polypeptide is Putative tyrosine-protein phosphatase OCA1 (OCA1) (Saccharomyces cerevisiae (strain YJM789) (Baker's yeast)).